Consider the following 438-residue polypeptide: Trigger factor (438 aa).

The 86-residue stretch at 163 to 248 folds into the PPIase FKBP-type domain; that stretch reads GDKLNIDFEG…VKRIETTEAR (86 aa).

This sequence belongs to the FKBP-type PPIase family. Tig subfamily.

It is found in the cytoplasm. The enzyme catalyses [protein]-peptidylproline (omega=180) = [protein]-peptidylproline (omega=0). Its function is as follows. Involved in protein export. Acts as a chaperone by maintaining the newly synthesized protein in an open conformation. Functions as a peptidyl-prolyl cis-trans isomerase. The chain is Trigger factor from Syntrophomonas wolfei subsp. wolfei (strain DSM 2245B / Goettingen).